We begin with the raw amino-acid sequence, 473 residues long: Sulfate adenylyltransferase subunit 1 (473 aa).

The tr-type G domain maps to 19–238 (KTLLKFLTCG…IKIKNSISSE (220 aa)). The tract at residues 28-35 (GSVDDGKS) is G1. 28-35 (GSVDDGKS) contacts GTP. Positions 86 to 90 (GITID) are G2. The tract at residues 107–110 (DTPG) is G3. GTP contacts are provided by residues 107-111 (DTPGH) and 162-165 (NKMD). Positions 162-165 (NKMD) are G4. The G5 stretch occupies residues 200–202 (SAL).

The protein belongs to the TRAFAC class translation factor GTPase superfamily. Classic translation factor GTPase family. CysN/NodQ subfamily. Heterodimer composed of CysD, the smaller subunit, and CysN.

The catalysed reaction is sulfate + ATP + H(+) = adenosine 5'-phosphosulfate + diphosphate. It functions in the pathway sulfur metabolism; hydrogen sulfide biosynthesis; sulfite from sulfate: step 1/3. In terms of biological role, with CysD forms the ATP sulfurylase (ATPS) that catalyzes the adenylation of sulfate producing adenosine 5'-phosphosulfate (APS) and diphosphate, the first enzymatic step in sulfur assimilation pathway. APS synthesis involves the formation of a high-energy phosphoric-sulfuric acid anhydride bond driven by GTP hydrolysis by CysN coupled to ATP hydrolysis by CysD. In Buchnera aphidicola subsp. Acyrthosiphon pisum (strain 5A), this protein is Sulfate adenylyltransferase subunit 1.